The chain runs to 892 residues: MAIYYKFKSARDYDTIAMDGPFISVGILKDKIFETKHLGTGKDLDIVVSNAQTNEEYLDEAMLIPKNTSVLIRRVPGRPRITVITTQEPRIQNKVEDVQAETTNFPVADPSAAEFPEDEYDEFGTDLYSIPDTQDAQHIIPRPHLATADDKVDEESKIQALIDTPALDWQQRQGQDTFGAGRGYGRGMPGRMNGRGFGMERKTPPPGYVCHRCNIPGHFIQHCPTNGDPNYDVKRVKPPTGIPKSMLMATPDGSYSLPSGAVAVLKPNEDAFEKEMEGLPSTTRSVGELPPELKCPLCKEVMKDAALTSKCCYKSFCDKCIRDHIISKSMCVCGRSDVLADDLLPNKTLRDTINRILEAGNDSTENVGSVGHIPDLESARCPPPKALSPTTSVASKGEKKPVLSNNNDASTLKAPMEVAEITSAPRASAEVNVEKPVDACESTQGSVIVKEATVSKLNTQAPKEEMQQQVAAGEPGKKKKKKPRVPGNDMQWNPVPDLAGPDYMMQMGPGPQYFNGMQPGFNGVQPGFNGVQPGFNGFHPGFNGFGGPFPGAMPPFMGYGLNPMDMGFGGGMNMMHPDPFMAQGFGFPNIPPPHRDLAEMGNRMNLQRAMMGRDEAEARNAEMLRKRENERRPEGGKMFRDGENSRMMMNNGTSASASSINPNKSRQAPPPPIHDYDRRRRPEKRLSPEHPPTRKNISPSRDSKRKSERYPDERDRQRDRERSRHQDVDREHDRTRDRRDEDRSRDHRHHRGETERSQHHHRKRSEPPSSEPPVPATKAEIENNLKSSVFARISFPEEETSSGKRRKVPSSSSTSVTDPSASASAAAAVGTSVHRHSSRKEIEVADYESSDEDRHFKRKPSRYARSPPVVVSDVSEDKLRYSKRGKGERSRA.

Positions 3–76 constitute a DWNN domain; that stretch reads IYYKFKSARD…NTSVLIRRVP (74 aa). Residues 210-224 form a CCHC-type zinc finger; it reads CHRCNIPGHFIQHCP. Ser285 bears the Phosphoserine mark. Residues 295–333 form an RING-type; degenerate zinc finger; it reads CPLCKEVMKDAALTSKCCYKSFCDKCIRDHIISKSMCVC. Disordered stretches follow at residues 375–408, 459–493, and 623–892; these read DLES…NNND, TQAP…MQWN, and MLRK…RSRA. Position 404 is a phosphoserine (Ser404). A compositionally biased stretch (basic and acidic residues) spans 623–644; that stretch reads MLRKRENERRPEGGKMFRDGEN. Residues 647–666 are compositionally biased toward polar residues; it reads MMMNNGTSASASSINPNKSR. Positions 674 to 692 are enriched in basic and acidic residues; sequence HDYDRRRRPEKRLSPEHPP. Positions 693–700 match the Nuclear localization signal motif; the sequence is TRKNISPS. The span at 708 to 745 shows a compositional bias: basic and acidic residues; sequence ERYPDERDRQRDRERSRHQDVDREHDRTRDRRDEDRSR. Residues 810–832 show a composition bias toward low complexity; that stretch reads SSSSTSVTDPSASASAAAAVGTS. Ser866 carries the post-translational modification Phosphoserine. Over residues 875-892 the composition is skewed to basic and acidic residues; that stretch reads SEDKLRYSKRGKGERSRA.

Its subcellular location is the nucleus. It catalyses the reaction S-ubiquitinyl-[E2 ubiquitin-conjugating enzyme]-L-cysteine + [acceptor protein]-L-lysine = [E2 ubiquitin-conjugating enzyme]-L-cysteine + N(6)-ubiquitinyl-[acceptor protein]-L-lysine.. This chain is E3 ubiquitin ligase PQT3-like, found in Arabidopsis thaliana (Mouse-ear cress).